Here is a 273-residue protein sequence, read N- to C-terminus: Dermonecrotic toxin LapSicTox-alphaIB1aii (273 aa).

His-5 is an active-site residue. Positions 25 and 27 each coordinate Mg(2+). His-41 functions as the Nucleophile in the catalytic mechanism. 2 disulfide bridges follow: Cys-45/Cys-51 and Cys-47/Cys-190. Asp-85 serves as a coordination point for Mg(2+). An N-linked (GlcNAc...) asparagine glycan is attached at Asn-250.

The protein belongs to the arthropod phospholipase D family. Class II subfamily. It depends on Mg(2+) as a cofactor. In terms of tissue distribution, expressed by the venom gland.

It localises to the secreted. The catalysed reaction is an N-(acyl)-sphingosylphosphocholine = an N-(acyl)-sphingosyl-1,3-cyclic phosphate + choline. It carries out the reaction an N-(acyl)-sphingosylphosphoethanolamine = an N-(acyl)-sphingosyl-1,3-cyclic phosphate + ethanolamine. The enzyme catalyses a 1-acyl-sn-glycero-3-phosphocholine = a 1-acyl-sn-glycero-2,3-cyclic phosphate + choline. It catalyses the reaction a 1-acyl-sn-glycero-3-phosphoethanolamine = a 1-acyl-sn-glycero-2,3-cyclic phosphate + ethanolamine. Dermonecrotic toxins cleave the phosphodiester linkage between the phosphate and headgroup of certain phospholipids (sphingolipid and lysolipid substrates), forming an alcohol (often choline) and a cyclic phosphate. This toxin acts on sphingomyelin (SM). It may also act on ceramide phosphoethanolamine (CPE), lysophosphatidylcholine (LPC) and lysophosphatidylethanolamine (LPE), but not on lysophosphatidylserine (LPS), and lysophosphatidylglycerol (LPG). It acts by transphosphatidylation, releasing exclusively cyclic phosphate products as second products. Induces dermonecrosis, hemolysis, increased vascular permeability, edema, inflammatory response, and platelet aggregation. This is Dermonecrotic toxin LapSicTox-alphaIB1aii from Loxosceles apachea (Apache recluse spider).